The following is a 60-amino-acid chain: Large ribosomal subunit protein bL32 (60 aa).

This sequence belongs to the bacterial ribosomal protein bL32 family.

The sequence is that of Large ribosomal subunit protein bL32 from Fervidobacterium nodosum (strain ATCC 35602 / DSM 5306 / Rt17-B1).